The chain runs to 400 residues: Bifunctional enzyme IspD/IspF (400 aa).

The tract at residues 1–240 (MQESTMKFGI…EKLSHALPDV (240 aa)) is 2-C-methyl-D-erythritol 4-phosphate cytidylyltransferase. The tract at residues 241–400 (RTGNGYDVHQ…ATVVYQGRPL (160 aa)) is 2-C-methyl-D-erythritol 2,4-cyclodiphosphate synthase. Residues D247 and H249 each coordinate a divalent metal cation. 4-CDP-2-C-methyl-D-erythritol 2-phosphate-binding positions include 247-249 (DVH) and 273-274 (HS). An a divalent metal cation-binding site is contributed by H281. Residues 295-297 (DIG), 371-374 (TTNE), F378, and R381 each bind 4-CDP-2-C-methyl-D-erythritol 2-phosphate.

In the N-terminal section; belongs to the IspD/TarI cytidylyltransferase family. IspD subfamily. It in the C-terminal section; belongs to the IspF family. The cofactor is a divalent metal cation.

The enzyme catalyses 2-C-methyl-D-erythritol 4-phosphate + CTP + H(+) = 4-CDP-2-C-methyl-D-erythritol + diphosphate. It carries out the reaction 4-CDP-2-C-methyl-D-erythritol 2-phosphate = 2-C-methyl-D-erythritol 2,4-cyclic diphosphate + CMP. Its pathway is isoprenoid biosynthesis; isopentenyl diphosphate biosynthesis via DXP pathway; isopentenyl diphosphate from 1-deoxy-D-xylulose 5-phosphate: step 2/6. It functions in the pathway isoprenoid biosynthesis; isopentenyl diphosphate biosynthesis via DXP pathway; isopentenyl diphosphate from 1-deoxy-D-xylulose 5-phosphate: step 4/6. Bifunctional enzyme that catalyzes the formation of 4-diphosphocytidyl-2-C-methyl-D-erythritol from CTP and 2-C-methyl-D-erythritol 4-phosphate (MEP) (IspD), and catalyzes the conversion of 4-diphosphocytidyl-2-C-methyl-D-erythritol 2-phosphate (CDP-ME2P) to 2-C-methyl-D-erythritol 2,4-cyclodiphosphate (ME-CPP) with a corresponding release of cytidine 5-monophosphate (CMP) (IspF). This Agrobacterium fabrum (strain C58 / ATCC 33970) (Agrobacterium tumefaciens (strain C58)) protein is Bifunctional enzyme IspD/IspF.